The primary structure comprises 474 residues: Dol-P-Glc:Glc(2)Man(9)GlcNAc(2)-PP-Dol alpha-1,2-glucosyltransferase (474 aa).

Residues 1–6 (MAQLEG) lie on the Cytoplasmic side of the membrane. The chain crosses the membrane as a helical span at residues 7 to 27 (YYFSAALSCTFLVSCLLFSAF). At 28 to 64 (SRALREPYMDEIFHLPQAQRYCEGRFSLSQWDPMITT) the chain is on the extracellular side. The helical transmembrane segment at 65 to 85 (LPGLYLVSVGVVKPASWILGW) threads the bilayer. Topologically, residues 86–97 (SEHVVCSIGMLR) are cytoplasmic. Residues 98–118 (FVNLLFSVGNFYLLYLLFRKI) form a helical membrane-spanning segment. Over 119–126 (QPRNKASS) the chain is Extracellular. A helical membrane pass occupies residues 127–147 (SIQRILSTLTLAVFPTLYFFN). Residues 148–150 (FLY) are Cytoplasmic-facing. The chain crosses the membrane as a helical span at residues 151–171 (YTEAGSVFFTLFAYLMCLYGN). Residues 172-175 (HRTS) are Extracellular-facing. Residues 176–196 (ALLGFCGFMFRQTNIIWAAFC) form a helical membrane-spanning segment. The Cytoplasmic portion of the chain corresponds to 197 to 256 (AGHIIAQKCSEAWKTELQKKKEERLPPAKGPLSELRRVLQFLLMYSMSLKNLSMLFLLTW). Residues 257–277 (PYMLLLLAFFVFVVVNGGIVV) traverse the membrane as a helical segment. At 278 to 283 (GDRSSH) the chain is on the extracellular side. The chain crosses the membrane as a helical span at residues 284–304 (EACLHFPQLFYFFSFTAFFSF). Topologically, residues 305 to 317 (PHLLSPTKVKTFL) are cytoplasmic. Residues 318–338 (SLVWKRRVQFSVITLVSVFLV) traverse the membrane as a helical segment. Residues 339–365 (WKFTYVHKYLLADNRHYTFYVWKRVFQ) are Extracellular-facing. A helical transmembrane segment spans residues 366–386 (RHEIVKYLLVPAYMFAGWAVA). Topologically, residues 387 to 392 (DSLKSK) are cytoplasmic. Residues 393 to 413 (SIFWNLMFFVCLVASTVPQKL) traverse the membrane as a helical segment. Over 414–436 (LEFRYFILPYIIYRLNMPLPPIS) the chain is Extracellular. Residues 437 to 457 (RLVCELGCYAVVNFLTFYIFL) traverse the membrane as a helical segment. Topologically, residues 458–473 (NKTFQWSDSHDIQRFM) are cytoplasmic.

Belongs to the ALG10 glucosyltransferase family. As to quaternary structure, interacts with KCNH1; may regulate KCNH1, possibly by regulating its N-glycosylation. Interacts with KCNH2; may reduce KCNH2 sensitivity to classic proarrhythmic drug blockade, possibly by regulating its N-glycosylation. As to expression, highly expressed in brain, skeletal muscle, uterus, small intestine and liver. Moderately expressed in lung and kidney. Weakly expressed in heart and stomach.

The protein localises to the endoplasmic reticulum membrane. It carries out the reaction an alpha-D-Glc-(1-&gt;3)-alpha-D-Glc-(1-&gt;3)-alpha-D-Man-(1-&gt;2)-alpha-D-Man-(1-&gt;2)-alpha-D-Man-(1-&gt;3)-[alpha-D-Man-(1-&gt;2)-alpha-D-Man-(1-&gt;3)-[alpha-D-Man-(1-&gt;2)-alpha-D-Man-(1-&gt;6)]-alpha-D-Man-(1-&gt;6)]-beta-D-Man-(1-&gt;4)-beta-D-GlcNAc-(1-&gt;4)-alpha-D-GlcNAc-diphospho-di-trans,poly-cis-dolichol + a di-trans,poly-cis-dolichyl beta-D-glucosyl phosphate = a alpha-D-Glc-(1-&gt;2)-alpha-D-Glc-(1-&gt;3)-alpha-D-Glc-(1-&gt;3)-alpha-D-Man-(1-&gt;2)-alpha-D-Man-(1-&gt;2)-alpha-D-Man-(1-&gt;3)-[alpha-D-Man-(1-&gt;2)-alpha-D-Man-(1-&gt;3)-[alpha-D-Man-(1-&gt;2)-alpha-D-Man-(1-&gt;6)]-alpha-D-Man-(1-&gt;6)]-beta-D-Man-(1-&gt;4)-beta-D-GlcNAc-(1-&gt;4)-alpha-D-GlcNAc-diphospho-di-trans,poly-cis-dolichol + a di-trans,poly-cis-dolichyl phosphate + H(+). It participates in protein modification; protein glycosylation. Dol-P-Glc:Glc(2)Man(9)GlcNAc(2)-PP-Dol alpha-1,2-glucosyltransferase that operates in the biosynthetic pathway of dolichol-linked oligosaccharides, the glycan precursors employed in protein asparagine (N)-glycosylation. The assembly of dolichol-linked oligosaccharides begins on the cytosolic side of the endoplasmic reticulum membrane and finishes in its lumen. The sequential addition of sugars to dolichol pyrophosphate produces dolichol-linked oligosaccharides containing fourteen sugars, including two GlcNAcs, nine mannoses and three glucoses. Once assembled, the oligosaccharide is transferred from the lipid to nascent proteins by oligosaccharyltransferases. In the lumen of the endoplasmic reticulum, adds the third and last glucose residue from dolichyl phosphate glucose (Dol-P-Glc) onto the lipid-linked oligosaccharide intermediate Glc(2)Man(9)GlcNAc(2)-PP-Dol to produce Glc(3)Man(9)GlcNAc(2)-PP-Dol. The chain is Dol-P-Glc:Glc(2)Man(9)GlcNAc(2)-PP-Dol alpha-1,2-glucosyltransferase from Rattus norvegicus (Rat).